The following is a 149-amino-acid chain: SKP1-like protein 14 (149 aa).

Positions 91–149 (LLAANYLNIKGLLDLSAQTVADRIKDKTPEEIREIFNIENDFTPEEEAAVRKENAWAFE) are interaction with the F-box domain of F-box proteins.

It belongs to the SKP1 family. As to quaternary structure, part of a SCF (SKP1-cullin-F-box) protein ligase complex. Interacts with CPR1/CPR30, At3g61590, At4g39550 and At5g49610. In terms of tissue distribution, restricted to inflorescences, pollen and leaves.

It localises to the nucleus. The protein operates within protein modification; protein ubiquitination. Functionally, involved in ubiquitination and subsequent proteasomal degradation of target proteins. Together with CUL1, RBX1 and a F-box protein, it forms a SCF E3 ubiquitin ligase complex. The functional specificity of this complex depends on the type of F-box protein. In the SCF complex, it serves as an adapter that links the F-box protein to CUL1. In Arabidopsis thaliana (Mouse-ear cress), this protein is SKP1-like protein 14 (ASK14).